Consider the following 386-residue polypeptide: MNIHEYQAKELLRDYGVPVPRGQVIYDVRDAQRAAWHIESDIAVVKAQIHAGGRGKAGGVKIAKSITEVEQFSRELLGKTLVTHQTGQEGRVVKAILIEEGCEIYKEYYIAFTLDRENSKIALIASEEGGMDIEEVAANRPDKILKEIIDPLIGLTDFQGRRVCFNLNIDGSLINDTVELMKNLYRCFIEKDCSLLEINPLVITKNNRVMALDAKINFDGNGLYRNEDVLKLRDLNEEDEKEIEASKYNLSYISLDGNIGCMVNGAGLAMATMDIIKLYGGNPANFLDVGGGASEEKVMNAFKIILSDPKVKGIFVNIFGGIMKCDVIAKGIVNAANEVKLNVPLVVRLEGTNVELGKEILNQSNLNIVTATTMADGAKKIVKLIK.

The ATP-grasp domain occupies 9-244 (KELLRDYGVP…LNEEDEKEIE (236 aa)). Residues lysine 46, 53 to 55 (GRG), glutamate 99, cysteine 102, and glutamate 107 contribute to the ATP site. Mg(2+) contacts are provided by asparagine 199 and aspartate 213. Residues asparagine 264 and 321-323 (GIM) contribute to the substrate site.

Belongs to the succinate/malate CoA ligase beta subunit family. In terms of assembly, heterotetramer of two alpha and two beta subunits. It depends on Mg(2+) as a cofactor.

It catalyses the reaction succinate + ATP + CoA = succinyl-CoA + ADP + phosphate. The catalysed reaction is GTP + succinate + CoA = succinyl-CoA + GDP + phosphate. It functions in the pathway carbohydrate metabolism; tricarboxylic acid cycle; succinate from succinyl-CoA (ligase route): step 1/1. In terms of biological role, succinyl-CoA synthetase functions in the citric acid cycle (TCA), coupling the hydrolysis of succinyl-CoA to the synthesis of either ATP or GTP and thus represents the only step of substrate-level phosphorylation in the TCA. The beta subunit provides nucleotide specificity of the enzyme and binds the substrate succinate, while the binding sites for coenzyme A and phosphate are found in the alpha subunit. This is Succinate--CoA ligase [ADP-forming] subunit beta from Alkaliphilus oremlandii (strain OhILAs) (Clostridium oremlandii (strain OhILAs)).